The following is a 385-amino-acid chain: Probable dual-specificity RNA methyltransferase RlmN (385 aa).

The disordered stretch occupies residues 1–35; sequence MNVKEPAEEAAIQLRTERQRIEPEGEEQSEQPTDL. Catalysis depends on Glu121, which acts as the Proton acceptor. The 236-residue stretch at 132–367 folds into the Radical SAM core domain; it reads TRDRVTVCLS…AVIREERGQD (236 aa). Cys139 and Cys372 are joined by a disulfide. The [4Fe-4S] cluster site is built by Cys146, Cys150, and Cys153. S-adenosyl-L-methionine-binding positions include 198-199, Ser230, 253-255, and Asn329; these read GE and SLH. The active-site S-methylcysteine intermediate is the Cys372.

The protein belongs to the radical SAM superfamily. RlmN family. Requires [4Fe-4S] cluster as cofactor.

It is found in the cytoplasm. It carries out the reaction adenosine(2503) in 23S rRNA + 2 reduced [2Fe-2S]-[ferredoxin] + 2 S-adenosyl-L-methionine = 2-methyladenosine(2503) in 23S rRNA + 5'-deoxyadenosine + L-methionine + 2 oxidized [2Fe-2S]-[ferredoxin] + S-adenosyl-L-homocysteine. The enzyme catalyses adenosine(37) in tRNA + 2 reduced [2Fe-2S]-[ferredoxin] + 2 S-adenosyl-L-methionine = 2-methyladenosine(37) in tRNA + 5'-deoxyadenosine + L-methionine + 2 oxidized [2Fe-2S]-[ferredoxin] + S-adenosyl-L-homocysteine. In terms of biological role, specifically methylates position 2 of adenine 2503 in 23S rRNA and position 2 of adenine 37 in tRNAs. The protein is Probable dual-specificity RNA methyltransferase RlmN of Heliobacterium modesticaldum (strain ATCC 51547 / Ice1).